The following is a 346-amino-acid chain: Protein farnesyltransferase/geranylgeranyltransferase type-1 subunit alpha (346 aa).

PFTA repeat units lie at residues 59–93, 94–128, 130–164, 165–198, and 205–239; these read RSTR…ALGV, DLRE…KLGA, AVTN…ALGG, WEDE…RSPL, and MREL…NDTQ.

It belongs to the protein prenyltransferase subunit alpha family. As to quaternary structure, heterodimer of an alpha and a beta subunit. Requires Mg(2+) as cofactor.

The catalysed reaction is L-cysteinyl-[protein] + (2E,6E)-farnesyl diphosphate = S-(2E,6E)-farnesyl-L-cysteinyl-[protein] + diphosphate. It catalyses the reaction geranylgeranyl diphosphate + L-cysteinyl-[protein] = S-geranylgeranyl-L-cysteinyl-[protein] + diphosphate. In terms of biological role, essential subunit of both the farnesyltransferase and the geranylgeranyltransferase complex. Contributes to the transfer of a farnesyl or geranylgeranyl moiety from farnesyl or geranylgeranyl diphosphate to a cysteine at the fourth position from the C-terminus of several proteins having the C-terminal sequence Cys-aliphatic-aliphatic-X. The chain is Protein farnesyltransferase/geranylgeranyltransferase type-1 subunit alpha (FTA) from Solanum lycopersicum (Tomato).